Here is a 374-residue protein sequence, read N- to C-terminus: Putative C-&gt;U-editing enzyme APOBEC-4 (374 aa).

One can recognise a CMP/dCMP-type deaminase domain in the interval 60–176 (PQTKHLTFYE…AWNRKALQSL (117 aa)). His-92 contacts Zn(2+). Glu-94 serves as the catalytic Proton donor. Residues Cys-126 and Cys-133 each contribute to the Zn(2+) site. The tract at residues 259–280 (EKHPLGSAAPAQRQPTRGQDPR) is disordered.

Belongs to the cytidine and deoxycytidylate deaminase family. Zn(2+) is required as a cofactor. In terms of tissue distribution, predominantly expressed in testis.

In terms of biological role, putative C to U editing enzyme whose physiological substrate is not yet known. The sequence is that of Putative C-&gt;U-editing enzyme APOBEC-4 (Apobec4) from Mus musculus (Mouse).